A 461-amino-acid polypeptide reads, in one-letter code: Bifunctional protein HldE (461 aa).

The tract at residues 1 to 312 is ribokinase; it reads MLEFLSQQKP…IKSFNRVDFE (312 aa). Residue 191–194 participates in ATP binding; that stretch reads NKKE. D259 is an active-site residue. Residues 334–461 form a cytidylyltransferase region; sequence FTNGCFDIVH…KIIEKIKDKK (128 aa).

In the N-terminal section; belongs to the carbohydrate kinase PfkB family. This sequence in the C-terminal section; belongs to the cytidylyltransferase family. In terms of assembly, homodimer.

The catalysed reaction is D-glycero-beta-D-manno-heptose 7-phosphate + ATP = D-glycero-beta-D-manno-heptose 1,7-bisphosphate + ADP + H(+). It catalyses the reaction D-glycero-beta-D-manno-heptose 1-phosphate + ATP + H(+) = ADP-D-glycero-beta-D-manno-heptose + diphosphate. It functions in the pathway nucleotide-sugar biosynthesis; ADP-L-glycero-beta-D-manno-heptose biosynthesis; ADP-L-glycero-beta-D-manno-heptose from D-glycero-beta-D-manno-heptose 7-phosphate: step 1/4. It participates in nucleotide-sugar biosynthesis; ADP-L-glycero-beta-D-manno-heptose biosynthesis; ADP-L-glycero-beta-D-manno-heptose from D-glycero-beta-D-manno-heptose 7-phosphate: step 3/4. Functionally, catalyzes the phosphorylation of D-glycero-D-manno-heptose 7-phosphate at the C-1 position to selectively form D-glycero-beta-D-manno-heptose-1,7-bisphosphate. Its function is as follows. Catalyzes the ADP transfer from ATP to D-glycero-beta-D-manno-heptose 1-phosphate, yielding ADP-D-glycero-beta-D-manno-heptose. The sequence is that of Bifunctional protein HldE from Campylobacter jejuni subsp. jejuni serotype O:6 (strain 81116 / NCTC 11828).